Reading from the N-terminus, the 215-residue chain is Pyrrolidone-carboxylate peptidase (215 aa).

Catalysis depends on residues Glu80, Cys143, and His167.

Belongs to the peptidase C15 family. In terms of assembly, homotetramer.

The protein resides in the cytoplasm. It catalyses the reaction Release of an N-terminal pyroglutamyl group from a polypeptide, the second amino acid generally not being Pro.. Functionally, removes 5-oxoproline from various penultimate amino acid residues except L-proline. In Bacillus anthracis, this protein is Pyrrolidone-carboxylate peptidase.